Consider the following 155-residue polypeptide: MSEVILDLQVATENTQGLPSEAQFITWLEAVLPQFQPISEVTIRIVDEAESHELNLTYRGKDRPTNVLSFPFEAPPEVELPLLGDLIICRQVVEKEADEQNKTVEEHWAHMVIHGCLHLLGYDHIEDDEAEEMEGLETEILQKLGYEDPYLIEKE.

Zn(2+) is bound by residues histidine 114, histidine 118, and histidine 124.

Belongs to the endoribonuclease YbeY family. Requires Zn(2+) as cofactor.

It is found in the cytoplasm. Single strand-specific metallo-endoribonuclease involved in late-stage 70S ribosome quality control and in maturation of the 3' terminus of the 16S rRNA. The sequence is that of Endoribonuclease YbeY from Proteus mirabilis (strain HI4320).